The primary structure comprises 207 residues: LexA repressor (207 aa).

A DNA-binding region (H-T-H motif) is located at residues Arg-28 to Lys-48. Residues Ser-124 and Lys-161 each act as for autocatalytic cleavage activity in the active site.

The protein belongs to the peptidase S24 family. Homodimer.

The enzyme catalyses Hydrolysis of Ala-|-Gly bond in repressor LexA.. Represses a number of genes involved in the response to DNA damage (SOS response), including recA and lexA. In the presence of single-stranded DNA, RecA interacts with LexA causing an autocatalytic cleavage which disrupts the DNA-binding part of LexA, leading to derepression of the SOS regulon and eventually DNA repair. This chain is LexA repressor, found in Vibrio vulnificus (strain CMCP6).